We begin with the raw amino-acid sequence, 413 residues long: Serpin A12 (413 aa).

Positions 1–20 (MTRMLDLGLFLAGLLTVKGL) are cleaved as a signal peptide. N-linked (GlcNAc...) asparagine glycans are attached at residues N92 and N267. The reactive center loop stretch occupies residues 364–382 (GMEGAAGSGAQTLPMETPR).

It belongs to the serpin family. As to quaternary structure, forms a stable complex with KLK7. Post-translationally, glycosylation slightly decreases affinity for heparin, but otherwise has no significant effect on KLK7 inhibitory activity or thermal stability of the protein. As to expression, expressed in visceral adipose tissues.

The protein resides in the secreted. With respect to regulation, inhibition of KLK7 is enhanced by heparin. Functionally, adipokine that modulates insulin action by specifically inhibiting its target protease KLK7 in white adipose tissues. The sequence is that of Serpin A12 (Serpina12) from Mus musculus (Mouse).